The chain runs to 298 residues: MLTFQQIIFKLQTFWADKGCTVIQSFDMEVGAGTSHPATCLRALGPEPWFAAYVQPSRRPKDGRYGDNPNRLQHYYQFQVALKPAPANIQDLYLDSLRELGIDPKVHDIRFVEDDWENPTLGAWGLGWEVWLNGMEVTQFTYFQQVGGIDCTPVLGEITYGIERLAMYLQGVENVYDLVWAKTLDGNTVTYGDVYHQNEVEQSTYNFEYSDADWLLRQFNDYEAQAKRLLAVEEASLALPAYELVLKAGHTFNLLDARGAISVTERATYIGRIRALSRAVAQKYVESREKLGFPLIKK.

This sequence belongs to the class-II aminoacyl-tRNA synthetase family. Tetramer of two alpha and two beta subunits.

It is found in the cytoplasm. It catalyses the reaction tRNA(Gly) + glycine + ATP = glycyl-tRNA(Gly) + AMP + diphosphate. This is Glycine--tRNA ligase alpha subunit from Neisseria meningitidis serogroup C / serotype 2a (strain ATCC 700532 / DSM 15464 / FAM18).